Here is a 256-residue protein sequence, read N- to C-terminus: Imidazole glycerol phosphate synthase subunit HisF (256 aa).

Catalysis depends on residues Asp-12 and Asp-131.

The protein belongs to the HisA/HisF family. Heterodimer of HisH and HisF.

The protein localises to the cytoplasm. It carries out the reaction 5-[(5-phospho-1-deoxy-D-ribulos-1-ylimino)methylamino]-1-(5-phospho-beta-D-ribosyl)imidazole-4-carboxamide + L-glutamine = D-erythro-1-(imidazol-4-yl)glycerol 3-phosphate + 5-amino-1-(5-phospho-beta-D-ribosyl)imidazole-4-carboxamide + L-glutamate + H(+). It functions in the pathway amino-acid biosynthesis; L-histidine biosynthesis; L-histidine from 5-phospho-alpha-D-ribose 1-diphosphate: step 5/9. Functionally, IGPS catalyzes the conversion of PRFAR and glutamine to IGP, AICAR and glutamate. The HisF subunit catalyzes the cyclization activity that produces IGP and AICAR from PRFAR using the ammonia provided by the HisH subunit. This chain is Imidazole glycerol phosphate synthase subunit HisF, found in Ectopseudomonas mendocina (strain ymp) (Pseudomonas mendocina).